The primary structure comprises 334 residues: Aspartate carbamoyltransferase catalytic subunit (334 aa).

Residues R71 and T72 each contribute to the carbamoyl phosphate site. Residue K99 participates in L-aspartate binding. Carbamoyl phosphate contacts are provided by R121, H151, and Q154. L-aspartate is bound by residues R184 and R239. Carbamoyl phosphate contacts are provided by G280 and P281.

This sequence belongs to the aspartate/ornithine carbamoyltransferase superfamily. ATCase family. Heterododecamer (2C3:3R2) of six catalytic PyrB chains organized as two trimers (C3), and six regulatory PyrI chains organized as three dimers (R2).

It catalyses the reaction carbamoyl phosphate + L-aspartate = N-carbamoyl-L-aspartate + phosphate + H(+). It participates in pyrimidine metabolism; UMP biosynthesis via de novo pathway; (S)-dihydroorotate from bicarbonate: step 2/3. In terms of biological role, catalyzes the condensation of carbamoyl phosphate and aspartate to form carbamoyl aspartate and inorganic phosphate, the committed step in the de novo pyrimidine nucleotide biosynthesis pathway. This chain is Aspartate carbamoyltransferase catalytic subunit, found in Pseudomonas savastanoi pv. phaseolicola (strain 1448A / Race 6) (Pseudomonas syringae pv. phaseolicola (strain 1448A / Race 6)).